Reading from the N-terminus, the 461-residue chain is ATP-dependent protease ATPase subunit HslU (461 aa).

Residues isoleucine 18, 60–65 (GVGKTE), aspartate 274, glutamate 339, and arginine 411 contribute to the ATP site.

It belongs to the ClpX chaperone family. HslU subfamily. In terms of assembly, a double ring-shaped homohexamer of HslV is capped on each side by a ring-shaped HslU homohexamer. The assembly of the HslU/HslV complex is dependent on binding of ATP.

The protein resides in the cytoplasm. In terms of biological role, ATPase subunit of a proteasome-like degradation complex; this subunit has chaperone activity. The binding of ATP and its subsequent hydrolysis by HslU are essential for unfolding of protein substrates subsequently hydrolyzed by HslV. HslU recognizes the N-terminal part of its protein substrates and unfolds these before they are guided to HslV for hydrolysis. The chain is ATP-dependent protease ATPase subunit HslU from Carboxydothermus hydrogenoformans (strain ATCC BAA-161 / DSM 6008 / Z-2901).